The chain runs to 213 residues: Small ribosomal subunit protein uS7 (213 aa).

It belongs to the universal ribosomal protein uS7 family. Component of the small ribosomal subunit (SSU). Mature N.crassa ribosomes consist of a small (40S) and a large (60S) subunit. The 40S small subunit contains 1 molecule of ribosomal RNA (18S rRNA) and at least 32 different proteins. The large 60S subunit contains 3 rRNA molecules (26S, 5.8S and 5S rRNA) and at least 42 different proteins.

It is found in the cytoplasm. Functionally, component of the ribosome, a large ribonucleoprotein complex responsible for the synthesis of proteins in the cell. The small ribosomal subunit (SSU) binds messenger RNAs (mRNAs) and translates the encoded message by selecting cognate aminoacyl-transfer RNA (tRNA) molecules. The large subunit (LSU) contains the ribosomal catalytic site termed the peptidyl transferase center (PTC), which catalyzes the formation of peptide bonds, thereby polymerizing the amino acids delivered by tRNAs into a polypeptide chain. The nascent polypeptides leave the ribosome through a tunnel in the LSU and interact with protein factors that function in enzymatic processing, targeting, and the membrane insertion of nascent chains at the exit of the ribosomal tunnel. The sequence is that of Small ribosomal subunit protein uS7 (rps-5) from Neurospora crassa (strain ATCC 24698 / 74-OR23-1A / CBS 708.71 / DSM 1257 / FGSC 987).